The following is a 241-amino-acid chain: Methylthioribulose-1-phosphate dehydratase (241 aa).

Cys102 serves as a coordination point for substrate. Positions 120, 122, and 199 each coordinate Zn(2+).

This sequence belongs to the aldolase class II family. MtnB subfamily. Zn(2+) serves as cofactor.

The protein localises to the cytoplasm. It carries out the reaction 5-(methylsulfanyl)-D-ribulose 1-phosphate = 5-methylsulfanyl-2,3-dioxopentyl phosphate + H2O. It functions in the pathway amino-acid biosynthesis; L-methionine biosynthesis via salvage pathway; L-methionine from S-methyl-5-thio-alpha-D-ribose 1-phosphate: step 2/6. Its function is as follows. Catalyzes the dehydration of methylthioribulose-1-phosphate (MTRu-1-P) into 2,3-diketo-5-methylthiopentyl-1-phosphate (DK-MTP-1-P). The protein is Methylthioribulose-1-phosphate dehydratase of Coprinopsis cinerea (strain Okayama-7 / 130 / ATCC MYA-4618 / FGSC 9003) (Inky cap fungus).